A 416-amino-acid chain; its full sequence is Serine hydroxymethyltransferase (416 aa).

(6S)-5,6,7,8-tetrahydrofolate-binding positions include leucine 121 and 125–127; that span reads GHL. At lysine 229 the chain carries N6-(pyridoxal phosphate)lysine.

This sequence belongs to the SHMT family. In terms of assembly, homodimer. It depends on pyridoxal 5'-phosphate as a cofactor.

It localises to the cytoplasm. The enzyme catalyses (6R)-5,10-methylene-5,6,7,8-tetrahydrofolate + glycine + H2O = (6S)-5,6,7,8-tetrahydrofolate + L-serine. It participates in one-carbon metabolism; tetrahydrofolate interconversion. Its pathway is amino-acid biosynthesis; glycine biosynthesis; glycine from L-serine: step 1/1. Catalyzes the reversible interconversion of serine and glycine with tetrahydrofolate (THF) serving as the one-carbon carrier. This reaction serves as the major source of one-carbon groups required for the biosynthesis of purines, thymidylate, methionine, and other important biomolecules. Also exhibits THF-independent aldolase activity toward beta-hydroxyamino acids, producing glycine and aldehydes, via a retro-aldol mechanism. This chain is Serine hydroxymethyltransferase, found in Neisseria gonorrhoeae (strain NCCP11945).